Reading from the N-terminus, the 246-residue chain is Serine protease 1 (246 aa).

The signal sequence occupies residues 1 to 15 (MSALLILALVGAAVA). The propeptide at 16-23 (FPLEDDDK) is activation peptide. Residues 24-244 (IVGGYTCPEH…FVGWIQDTIA (221 aa)) form the Peptidase S1 domain. 6 disulfides stabilise this stretch: Cys30–Cys160, Cys48–Cys64, Cys132–Cys233, Cys139–Cys206, Cys171–Cys185, and Cys196–Cys220. Residue His63 is the Charge relay system of the active site. The Ca(2+) site is built by Glu75, Asn77, Val80, and Glu85. The active-site Charge relay system is Asp107. Ser200 serves as the catalytic Charge relay system.

The protein belongs to the peptidase S1 family. As to quaternary structure, interacts with SERPINA1. Ca(2+) serves as cofactor.

It is found in the secreted. Its subcellular location is the extracellular space. It catalyses the reaction Preferential cleavage: Arg-|-Xaa, Lys-|-Xaa.. In Rattus norvegicus (Rat), this protein is Serine protease 1.